Reading from the N-terminus, the 473-residue chain is uncharacterized protein (473 aa).

A signal peptide spans 1–19; that stretch reads MIRAFLVFPYLYILVQSNG.

This is an uncharacterized protein from Methanocaldococcus jannaschii (strain ATCC 43067 / DSM 2661 / JAL-1 / JCM 10045 / NBRC 100440) (Methanococcus jannaschii).